An 81-amino-acid chain; its full sequence is Sulfur carrier protein TusA (81 aa).

Residue Cys-19 is the Cysteine persulfide intermediate of the active site.

This sequence belongs to the sulfur carrier protein TusA family.

Its subcellular location is the cytoplasm. Sulfur carrier protein which probably makes part of a sulfur-relay system. The protein is Sulfur carrier protein TusA of Shewanella piezotolerans (strain WP3 / JCM 13877).